The primary structure comprises 114 residues: Large ribosomal subunit protein uL22 (114 aa).

The protein belongs to the universal ribosomal protein uL22 family. Part of the 50S ribosomal subunit.

Functionally, this protein binds specifically to 23S rRNA; its binding is stimulated by other ribosomal proteins, e.g. L4, L17, and L20. It is important during the early stages of 50S assembly. It makes multiple contacts with different domains of the 23S rRNA in the assembled 50S subunit and ribosome. Its function is as follows. The globular domain of the protein is located near the polypeptide exit tunnel on the outside of the subunit, while an extended beta-hairpin is found that lines the wall of the exit tunnel in the center of the 70S ribosome. In Desulfosudis oleivorans (strain DSM 6200 / JCM 39069 / Hxd3) (Desulfococcus oleovorans), this protein is Large ribosomal subunit protein uL22.